Reading from the N-terminus, the 505-residue chain is ATP synthase subunit alpha (505 aa).

Residue 169–176 participates in ATP binding; the sequence is GDRKTGKT.

It belongs to the ATPase alpha/beta chains family. In terms of assembly, F-type ATPases have 2 components, CF(1) - the catalytic core - and CF(0) - the membrane proton channel. CF(1) has five subunits: alpha(3), beta(3), gamma(1), delta(1), epsilon(1). CF(0) has three main subunits: a(1), b(2) and c(9-12). The alpha and beta chains form an alternating ring which encloses part of the gamma chain. CF(1) is attached to CF(0) by a central stalk formed by the gamma and epsilon chains, while a peripheral stalk is formed by the delta and b chains.

Its subcellular location is the cell membrane. It catalyses the reaction ATP + H2O + 4 H(+)(in) = ADP + phosphate + 5 H(+)(out). Its function is as follows. Produces ATP from ADP in the presence of a proton gradient across the membrane. The alpha chain is a regulatory subunit. The chain is ATP synthase subunit alpha from Leuconostoc mesenteroides subsp. mesenteroides (strain ATCC 8293 / DSM 20343 / BCRC 11652 / CCM 1803 / JCM 6124 / NCDO 523 / NBRC 100496 / NCIMB 8023 / NCTC 12954 / NRRL B-1118 / 37Y).